A 149-amino-acid chain; its full sequence is Ribonuclease VapC2 (149 aa).

A PINc domain is found at 11 to 149 (IFFDSNILIY…RVDFLEIIEI (139 aa)). Mg(2+)-binding residues include D14 and D116.

This sequence belongs to the PINc/VapC protein family. Mg(2+) is required as a cofactor.

In terms of biological role, toxic component of a type II toxin-antitoxin (TA) system. An RNase. Its cognate antitoxin is VapB2. This Methanocaldococcus jannaschii (strain ATCC 43067 / DSM 2661 / JAL-1 / JCM 10045 / NBRC 100440) (Methanococcus jannaschii) protein is Ribonuclease VapC2.